Reading from the N-terminus, the 467-residue chain is ESX-4 secretion system protein eccD4 (467 aa).

11 consecutive transmembrane segments (helical) span residues 122-142 (GALA…RNAL), 152-172 (ATAG…VIAC), 186-206 (VIAT…VPGV), 209-229 (VLVA…ITGC), 241-261 (AVVV…VPAI), 264-284 (LATL…VLLA), 319-339 (LTSL…GTAV), 344-364 (IHRS…LLLL), 374-394 (SLVF…VAAD), 401-421 (PWIA…GFVA), and 439-459 (CLAL…YSAV).

It belongs to the EccD/Snm4 family. In terms of assembly, part of the ESX-4 / type VII secretion system (T7SS), which is composed of cytosolic and membrane components.

It is found in the cell membrane. The protein is ESX-4 secretion system protein eccD4 (eccD4) of Mycobacterium tuberculosis (strain CDC 1551 / Oshkosh).